The following is a 437-amino-acid chain: Epsilon-sarcoglycan (437 aa).

At 1-317 (MLLFWWWELG…LKSRDYYTDF (317 aa)) the chain is on the extracellular side. N-linked (GlcNAc...) asparagine glycosylation occurs at asparagine 200. A helical membrane pass occupies residues 318–338 (LVTLAVPSAVALVLFLILAYI). Topologically, residues 339–437 (MCCRREGVEK…QQQTTGKWYP (99 aa)) are cytoplasmic.

The protein belongs to the sarcoglycan alpha/epsilon family. N-glycosylated. Post-translationally, ubiquitinated, leading to its degradation by the proteasome. In both neural tissues including cerebellar cortex, striatum, cerebral cortex, thalamus and hippocampus, and non-neural tissues including quadriceps muscle, liver, kidney, spleen, lung, testis and heart. Widely distributed in the brain, with a robust signal obtained from regions with dense neuronal packing such as the pyramidal cell layer of the hippocampus, cerebellar molecular layer, and cerebral cortex. Levels are highest in kidney, moderate in brain and lung, and low in skeletal muscle, liver, spleen and testis.

It is found in the cell membrane. The protein localises to the sarcolemma. It localises to the cytoplasm. The protein resides in the cytoskeleton. Its subcellular location is the cell projection. It is found in the dendrite. The protein localises to the golgi apparatus. Component of the sarcoglycan complex, a subcomplex of the dystrophin-glycoprotein complex which forms a link between the F-actin cytoskeleton and the extracellular matrix. This Rattus norvegicus (Rat) protein is Epsilon-sarcoglycan.